A 1340-amino-acid polypeptide reads, in one-letter code: WASH complex subunit 2 (1340 aa).

Residues 1-219 (MNRTTPDQEL…VGSDRGSIVD (219 aa)) are sufficient for interaction with WASHC3, WASHC4 and WASHC5; required for interaction with WASHC1. Phosphoserine occurs at positions 157, 159, 204, 205, and 209. Residues 201-213 (GELSSEEGSVGSD) are compositionally biased toward low complexity. Residues 201–404 (GELSSEEGSV…SSSKPGKKIP (204 aa)) form a disordered region. Over residues 219–231 (DTEEEKEEEESDE) the composition is skewed to acidic residues. Positions 232–241 (DFAHHSDNDQ) are enriched in basic and acidic residues. 2 stretches are compositionally biased toward acidic residues: residues 249 to 258 (SDEEEDDDGC) and 265 to 275 (EKEEEDIEDIE). Ser-287 carries the post-translational modification Phosphoserine. Residues 292 to 306 (LAARIKGDAVGRVDE) are compositionally biased toward basic and acidic residues. At Thr-330 the chain carries Phosphothreonine. The span at 354–365 (GSGGGLFSGGKG) shows a compositional bias: gly residues. The sufficient for interaction with CCDC93 stretch occupies residues 355-599 (SGGGLFSGGK…QTLSLQAQGE (245 aa)). The tract at residues 356–1340 (GGGLFSGGKG…DDPLNAFGGQ (985 aa)) is interaction with VPS35. The LFa 1 motif lies at 366–377 (LFDDEDEESDLF). Phosphoserine occurs at positions 394 and 396. Short sequence motifs (LFa) lie at residues 410–418 (VFLGDTDVF), 449–462 (LFDD…DDFF), and 481–490 (IFGDDEGDLF). Disordered regions lie at residues 421 to 586 (ASVP…GGTA), 618 to 663 (SSDE…KASL), and 695 to 838 (DSGG…STGV). A compositionally biased stretch (acidic residues) spans 450 to 461 (FDDDDGDDDDDF). Residues 506 to 516 (DENKARAEKKV) are compositionally biased toward basic and acidic residues. Residues 517–527 (SLPSSKNLKPS) are compositionally biased toward low complexity. Short sequence motifs (LFa) lie at residues 536-547 (LFSDEEDSEDLF), 571-582 (LFEDEDEEDNLF), and 616-628 (LFSS…WNIP). 2 positions are modified to phosphoserine: Ser-538 and Ser-543. The segment covering 546 to 566 (LFSSQSASKLKGAPLLPGKLP) has biased composition (low complexity). Phosphoserine occurs at positions 618 and 619. The segment covering 636-646 (SDSRSKGESRD) has biased composition (basic and acidic residues). 3 short sequence motifs (LFa) span residues 663 to 673 (LFEEDEEDDLF), 689 to 701 (LFED…GSLF), and 725 to 737 (LFSD…AQLG). Phosphoserine occurs at positions 727, 751, 786, and 801. Over residues 740-767 (PVDKKVESAKESLKFGRTDVAESEKEGL) the composition is skewed to basic and acidic residues. An LFa 11 motif is present at residues 802 to 816 (LFDEEEDKMEDQNTI). A compositionally biased stretch (basic and acidic residues) spans 822–833 (EVGKGRDPDARP). Short sequence motifs (LFa) lie at residues 838-846 (VFQDEELLF) and 855-861 (DPDVDLF). Phosphoserine is present on residues Ser-873 and Ser-876. The LFa 14 signature appears at 877-887 (LFGDDEDDDLF). Disordered regions lie at residues 906–950 (DYSV…KEPS) and 987–1205 (FPSS…EDED). The segment covering 916–930 (KHPETIQGIKEKGIW) has biased composition (basic and acidic residues). The interval 936 to 1340 (QDSSGLAPFK…DDPLNAFGGQ (405 aa)) is interaction with phospholipids. Residues 1027 to 1045 (NKSRVKMRGKRRPQTRAAR) are compositionally biased toward basic residues. The required for interaction with F-actin-capping protein subunit alpha (CAPZA1 or CAPZA2 or CAPZA3) stretch occupies residues 1028–1046 (KSRVKMRGKRRPQTRAARR). Phosphoserine occurs at positions 1053 and 1086. Over residues 1093–1109 (EALAAAAAPWEGGPVPG) the composition is skewed to low complexity. Position 1113 is a phosphoserine (Ser-1113). Short sequence motifs (LFa) lie at residues 1128-1135 (LFDSGDIF), 1170-1184 (MFPA…DDLF), 1200-1208 (LLEDEDDLF), 1233-1239 (IFEDDIF), 1261-1269 (LFDDNIDIF), and 1289-1298 (IFDDDMDDIF). A phosphoserine mark is found at Ser-1178 and Ser-1179. The segment at 1301 to 1325 (GIQAKTAKPKSRSAQAAPEPRFEHK) is disordered. Residues 1329–1337 (IFDDPLNAF) carry the LFa 21 motif.

Belongs to the FAM21 family. In terms of assembly, component of the WASH core complex also described as WASH regulatory complex (SHRC) composed of WASHC1, WASHC2, WASHC3, WASHC4 and WASHC5; in the complex interacts (via N-terminus) directly with WASHC1. The WASH core complex associates with the F-actin-capping protein dimer (formed by CAPZA1, CAPZA2 or CAPZA3 and CAPZB) in a transient or substoichiometric manner which was initially described as WASH complex. Interacts with VPS35; mediates the association with the retromer CSC complex. Interacts with FKBP15. Interacts with CCDC93, CCDC22, VPS35L; indicative for an association of the WASH core complex with the CCC and retriever complexes. Directly interacts with TBC1D23.

It localises to the early endosome membrane. The protein resides in the cell membrane. In terms of biological role, acts as a component of the WASH core complex that functions as a nucleation-promoting factor (NPF) at the surface of endosomes, where it recruits and activates the Arp2/3 complex to induce actin polymerization, playing a key role in the fission of tubules that serve as transport intermediates during endosome sorting. Mediates the recruitment of the WASH core complex to endosome membranes via binding to phospholipids and VPS35 of the retromer CSC. Mediates the recruitment of the F-actin-capping protein dimer to the WASH core complex probably promoting localized F-actin polymerization needed for vesicle scission. Via its C-terminus binds various phospholipids, most strongly phosphatidylinositol 4-phosphate (PtdIns-(4)P), phosphatidylinositol 5-phosphate (PtdIns-(5)P) and phosphatidylinositol 3,5-bisphosphate (PtdIns-(3,5)P2). Involved in the endosome-to-plasma membrane trafficking and recycling of SNX27-retromer-dependent cargo proteins, such as GLUT1. Required for the association of DNAJC13, ENTR1, ANKRD50 with retromer CSC subunit VPS35. Required for the endosomal recruitment of CCC and retriever complexes subunits COMMD1 and CCDC93 as well as the retrievere complex subunit VPS35L. The chain is WASH complex subunit 2 from Pongo abelii (Sumatran orangutan).